Here is a 225-residue protein sequence, read N- to C-terminus: NAD(P)H-quinone oxidoreductase subunit K, chloroplastic (225 aa).

The [4Fe-4S] cluster site is built by Cys-43, Cys-44, Cys-108, and Cys-139.

This sequence belongs to the complex I 20 kDa subunit family. NDH is composed of at least 16 different subunits, 5 of which are encoded in the nucleus. The cofactor is [4Fe-4S] cluster.

The protein resides in the plastid. The protein localises to the chloroplast thylakoid membrane. It catalyses the reaction a plastoquinone + NADH + (n+1) H(+)(in) = a plastoquinol + NAD(+) + n H(+)(out). The enzyme catalyses a plastoquinone + NADPH + (n+1) H(+)(in) = a plastoquinol + NADP(+) + n H(+)(out). Functionally, NDH shuttles electrons from NAD(P)H:plastoquinone, via FMN and iron-sulfur (Fe-S) centers, to quinones in the photosynthetic chain and possibly in a chloroplast respiratory chain. The immediate electron acceptor for the enzyme in this species is believed to be plastoquinone. Couples the redox reaction to proton translocation, and thus conserves the redox energy in a proton gradient. This chain is NAD(P)H-quinone oxidoreductase subunit K, chloroplastic, found in Lolium perenne (Perennial ryegrass).